We begin with the raw amino-acid sequence, 59 residues long: Small integral membrane protein 30 (59 aa).

A signal peptide spans 1-24 (MNSVSTQLILVLASLLLILPVVEA). At 25-29 (VEAGD) the chain is on the extracellular side. A helical membrane pass occupies residues 30 to 50 (AIALLLGVVLSITGICACLGI). At 51–59 (YARKRNGQM) the chain is on the cytoplasmic side.

In terms of assembly, interacts (via transmembrane domain) with antiviral protein MAVS (via transmembrane domain); the interaction disrupts MAVS interaction with RIGI and inhibits MAVS aggregation, resulting in the repression of type I interferon signaling and innate immune responses.

It is found in the endoplasmic reticulum membrane. The protein localises to the mitochondrion membrane. In terms of biological role, negatively regulates antiviral innate immune responses. Disrupts the interaction of antiviral protein MAVS with innate immune receptor RIGI and inhibits MAVS aggregation, resulting in the repression of type I interferon signaling and innate immune responses. The polypeptide is Small integral membrane protein 30 (Mus musculus (Mouse)).